The sequence spans 152 residues: Xanthine-guanine phosphoribosyltransferase (152 aa).

Residues 37-38 (RG), Arg-69, and 88-96 (DDLVDTGGT) each bind 5-phospho-alpha-D-ribose 1-diphosphate. Position 69 (Arg-69) interacts with GMP. Asp-89 contacts Mg(2+). Guanine contacts are provided by Asp-92 and Ile-135. Positions 92 and 135 each coordinate xanthine. GMP contacts are provided by residues 92 to 96 (DTGGT) and 134 to 135 (WI).

The protein belongs to the purine/pyrimidine phosphoribosyltransferase family. XGPT subfamily. In terms of assembly, homotetramer. The cofactor is Mg(2+).

Its subcellular location is the cell inner membrane. It catalyses the reaction GMP + diphosphate = guanine + 5-phospho-alpha-D-ribose 1-diphosphate. The enzyme catalyses XMP + diphosphate = xanthine + 5-phospho-alpha-D-ribose 1-diphosphate. It carries out the reaction IMP + diphosphate = hypoxanthine + 5-phospho-alpha-D-ribose 1-diphosphate. It functions in the pathway purine metabolism; GMP biosynthesis via salvage pathway; GMP from guanine: step 1/1. It participates in purine metabolism; XMP biosynthesis via salvage pathway; XMP from xanthine: step 1/1. In terms of biological role, purine salvage pathway enzyme that catalyzes the transfer of the ribosyl-5-phosphate group from 5-phospho-alpha-D-ribose 1-diphosphate (PRPP) to the N9 position of the 6-oxopurines guanine and xanthine to form the corresponding ribonucleotides GMP (guanosine 5'-monophosphate) and XMP (xanthosine 5'-monophosphate), with the release of PPi. To a lesser extent, also acts on hypoxanthine. This is Xanthine-guanine phosphoribosyltransferase from Citrobacter koseri (strain ATCC BAA-895 / CDC 4225-83 / SGSC4696).